The primary structure comprises 347 residues: Ataxin-7-like protein 3 (347 aa).

The segment at 84 to 105 (CVCPNCSRSIAASRFAPHLEKC) adopts an SGF11-type zinc-finger fold. The span at 116–125 (ANRRIANSNN) shows a compositional bias: low complexity. The disordered stretch occupies residues 116–184 (ANRRIANSNN…GELSNSDPFK (69 aa)). A phosphoserine mark is found at serine 129 and serine 131. The segment covering 132-141 (DQEDNDDIND) has biased composition (acidic residues). The region spanning 196–263 (LGPEELRSLL…SLDNDSFDMT (68 aa)) is the SCA7 domain. Residues 275 to 288 (DGSSDLSPSDSGSS) show a composition bias toward low complexity. The segment at 275 to 347 (DGSSDLSPSD…PTPSIYDDIN (73 aa)) is disordered. 3 positions are modified to phosphoserine: serine 278, serine 281, and serine 326.

The protein belongs to the SGF11 family. As to quaternary structure, component of some SAGA transcription coactivator-HAT complexes, at least composed of ATXN7, ATXN7L3, ENY2, GCN5L2, SUPT3H, TAF10, TRRAP and USP22. Within the SAGA complex, ENY2, ATXN7, ATXN7L3, and USP22 form an additional subcomplex of SAGA called the DUB module (deubiquitination module). Interacts directly with ENY2 and USP22.

Its subcellular location is the nucleus. Its function is as follows. Component of the transcription regulatory histone acetylation (HAT) complex SAGA, a multiprotein complex that activates transcription by remodeling chromatin and mediating histone acetylation and deubiquitination. Within the SAGA complex, participates in a subcomplex that specifically deubiquitinates both histones H2A and H2B. The SAGA complex is recruited to specific gene promoters by activators such as MYC, where it is required for transcription. Required for nuclear receptor-mediated transactivation. Within the complex, it is required to recruit USP22 and ENY2 into the SAGA complex. Regulates H2B monoubiquitination (H2Bub1) levels. Affects subcellular distribution of ENY2, USP22 and ATXN7L3B. The polypeptide is Ataxin-7-like protein 3 (Homo sapiens (Human)).